A 671-amino-acid chain; its full sequence is UvrABC system protein B (671 aa).

In terms of domain architecture, Helicase ATP-binding spans lysine 35–arginine 423. Glycine 48–threonine 55 is an ATP binding site. The Beta-hairpin signature appears at asparagine 101–glutamine 124. In terms of domain architecture, Helicase C-terminal spans glutamine 440 to isoleucine 602. A UVR domain is found at glutamine 632–glutamate 667.

The protein belongs to the UvrB family. As to quaternary structure, forms a heterotetramer with UvrA during the search for lesions. Interacts with UvrC in an incision complex.

The protein resides in the cytoplasm. Its function is as follows. The UvrABC repair system catalyzes the recognition and processing of DNA lesions. A damage recognition complex composed of 2 UvrA and 2 UvrB subunits scans DNA for abnormalities. Upon binding of the UvrA(2)B(2) complex to a putative damaged site, the DNA wraps around one UvrB monomer. DNA wrap is dependent on ATP binding by UvrB and probably causes local melting of the DNA helix, facilitating insertion of UvrB beta-hairpin between the DNA strands. Then UvrB probes one DNA strand for the presence of a lesion. If a lesion is found the UvrA subunits dissociate and the UvrB-DNA preincision complex is formed. This complex is subsequently bound by UvrC and the second UvrB is released. If no lesion is found, the DNA wraps around the other UvrB subunit that will check the other stand for damage. This chain is UvrABC system protein B, found in Mycoplasma mycoides subsp. mycoides SC (strain CCUG 32753 / NCTC 10114 / PG1).